The following is a 347-amino-acid chain: Haptoglobin (347 aa).

Residues 1 to 18 form the signal peptide; that stretch reads MSALGAVIALLLWGQLFA. Positions 31 to 88 constitute a Sushi domain; the sequence is DGCPKPPEIANGYVEHLVRYQCKKYYRLRTEGDGVYTLNNEKQWTNKAVGDKLPECEA. 4 cysteine pairs are disulfide-bonded: C52-C86, C90-C207, C250-C281, and C292-C322. A Peptidase S1 domain is found at 103–345; that stretch reads ILGGHLDAKG…IQDWVQKTIA (243 aa). 4 N-linked (GlcNAc...) asparagine glycosylation sites follow: N125, N148, N152, and N182. Positions 259–264 are interaction with CD163; that stretch reads VPEKKT.

It belongs to the peptidase S1 family. As to quaternary structure, tetramer of two alpha and two beta chains; disulfide-linked. The hemoglobin/haptoglobin complex is composed of a haptoglobin dimer bound to two hemoglobin alpha-beta dimers. Interacts with CD163. Interacts with ERGIC3. In terms of tissue distribution, expressed by the liver and secreted in plasma.

The protein resides in the secreted. In terms of biological role, as a result of hemolysis, hemoglobin is found to accumulate in the kidney and is secreted in the urine. Haptoglobin captures, and combines with free plasma hemoglobin to allow hepatic recycling of heme iron and to prevent kidney damage. Haptoglobin also acts as an antioxidant, has antibacterial activity and plays a role in modulating many aspects of the acute phase response. Hemoglobin/haptoglobin complexes are rapidly cleared by the macrophage CD163 scavenger receptor expressed on the surface of liver Kupfer cells through an endocytic lysosomal degradation pathway. The sequence is that of Haptoglobin (HP) from Ateles geoffroyi (Black-handed spider monkey).